A 468-amino-acid polypeptide reads, in one-letter code: UDP-glucosyl transferase 74CD1 (468 aa).

Residue glycine 20 participates in UDP-alpha-D-glucose binding. Histidine 21 functions as the Proton acceptor in the catalytic mechanism. Catalysis depends on aspartate 114, which acts as the Charge relay. UDP-alpha-D-glucose contacts are provided by serine 292, tryptophan 344, glutamine 347, histidine 362, tryptophan 365, asparagine 366, serine 367, glutamate 370, aspartate 386, and glutamine 387.

This sequence belongs to the UDP-glycosyltransferase family. In terms of tissue distribution, mainly expressed in flowers, flower buds and young leaves, and, to a lesser extent, in old leaves, stems and roots.

Its pathway is secondary metabolite biosynthesis; terpenoid biosynthesis. Functionally, component of the oleanane-type triterpene saponins (e.g. saponarioside A and saponarioside B) biosynthetic pathway, leading to the production of natural products with detergent properties used as traditional sources of soap. A glycosyltransferase that, together with SDR1, mediates the conversion of QA-tri to QA-triF; UGT74CD1 may transfer 4-keto-6-deoxy-glucose to QA-tri, which is in turn reduced to D-fucose by SDR1, thus leading to QA-triF formation via the initiation of the C-28 sugar chain. In Saponaria officinalis (Common soapwort), this protein is UDP-glucosyl transferase 74CD1.